Reading from the N-terminus, the 89-residue chain is MKFSLATIALAAAVAASPTNPPAGAGNCNVKGKTGNVTCCNSAIPILGQLACNVLASGTCNSGQTAYCCDTGGNTGLINVIALNCVKLL.

An N-terminal signal peptide occupies residues 1-16 (MKFSLATIALAAAVAA). 4 disulfides stabilise this stretch: cysteine 28–cysteine 68, cysteine 39–cysteine 60, cysteine 40–cysteine 52, and cysteine 69–cysteine 85. Residue asparagine 36 is glycosylated (N-linked (GlcNAc...) asparagine).

The protein belongs to the fungal hydrophobin family.

It localises to the secreted. It is found in the cell wall. Its subcellular location is the vacuole. The protein resides in the cytoplasmic vesicle. In terms of biological role, aerial growth, conidiation, and dispersal of filamentous fungi in the environment rely upon a capability of their secreting small amphipathic proteins called hydrophobins (HPBs) with low sequence identity. Class I can self-assemble into an outermost layer of rodlet bundles on aerial cell surfaces, conferring cellular hydrophobicity that supports fungal growth, development and dispersal; whereas Class II form highly ordered films at water-air interfaces through intermolecular interactions but contribute nothing to the rodlet structure. Hyd1C contributes to certain cell wall-related features, such as hydrophobicity but is not involved in cell wall-related events during fungal proliferation in host hemocoel. Does not contribute to conidial hydrophobicity. This chain is Class I hydrophobin C, found in Beauveria bassiana (strain ARSEF 2860) (White muscardine disease fungus).